The primary structure comprises 764 residues: 5-methyltetrahydropteroyltriglutamate--homocysteine methyltransferase (764 aa).

Residues 16 to 19 (RELK) and Lys-115 each bind 5-methyltetrahydropteroyltri-L-glutamate. Residues 435 to 437 (IGS) and Glu-488 each bind L-homocysteine. Residues 435-437 (IGS) and Glu-488 contribute to the L-methionine site. 5-methyltetrahydropteroyltri-L-glutamate is bound by residues 519–520 (RC) and Trp-565. Asp-603 contributes to the L-homocysteine binding site. Residue Asp-603 coordinates L-methionine. Position 609 (Glu-609) interacts with 5-methyltetrahydropteroyltri-L-glutamate. Positions 645, 647, and 669 each coordinate Zn(2+). The active-site Proton donor is the His-698. A Zn(2+)-binding site is contributed by Cys-730.

It belongs to the vitamin-B12 independent methionine synthase family. Requires Zn(2+) as cofactor.

The catalysed reaction is 5-methyltetrahydropteroyltri-L-glutamate + L-homocysteine = tetrahydropteroyltri-L-glutamate + L-methionine. The protein operates within amino-acid biosynthesis; L-methionine biosynthesis via de novo pathway; L-methionine from L-homocysteine (MetE route): step 1/1. In terms of biological role, catalyzes the transfer of a methyl group from 5-methyltetrahydrofolate to homocysteine resulting in methionine formation. This Burkholderia pseudomallei (strain K96243) protein is 5-methyltetrahydropteroyltriglutamate--homocysteine methyltransferase.